Consider the following 444-residue polypeptide: Ribosomal protein uS12 methylthiotransferase RimO (444 aa).

An MTTase N-terminal domain is found at 3–119 (IKIGLVSLGC…IARAVRRVLE (117 aa)). Positions 12, 48, 82, 156, 160, and 163 each coordinate [4Fe-4S] cluster. One can recognise a Radical SAM core domain in the interval 142–372 (ATPPYTAYLK…MMLQQEISLQ (231 aa)). Residues 375–444 (LKRVGEVIEV…EYDLTGETVL (70 aa)) enclose the TRAM domain.

This sequence belongs to the methylthiotransferase family. RimO subfamily. It depends on [4Fe-4S] cluster as a cofactor.

The protein resides in the cytoplasm. It catalyses the reaction L-aspartate(89)-[ribosomal protein uS12]-hydrogen + (sulfur carrier)-SH + AH2 + 2 S-adenosyl-L-methionine = 3-methylsulfanyl-L-aspartate(89)-[ribosomal protein uS12]-hydrogen + (sulfur carrier)-H + 5'-deoxyadenosine + L-methionine + A + S-adenosyl-L-homocysteine + 2 H(+). Functionally, catalyzes the methylthiolation of an aspartic acid residue of ribosomal protein uS12. This chain is Ribosomal protein uS12 methylthiotransferase RimO, found in Pelotomaculum thermopropionicum (strain DSM 13744 / JCM 10971 / SI).